Here is a 415-residue protein sequence, read N- to C-terminus: Serine hydroxymethyltransferase (415 aa).

(6S)-5,6,7,8-tetrahydrofolate-binding positions include leucine 121 and 125 to 127 (GHL). Lysine 230 carries the post-translational modification N6-(pyridoxal phosphate)lysine. Residue 355–357 (SPF) coordinates (6S)-5,6,7,8-tetrahydrofolate.

It belongs to the SHMT family. Homodimer. Requires pyridoxal 5'-phosphate as cofactor.

It is found in the cytoplasm. It carries out the reaction (6R)-5,10-methylene-5,6,7,8-tetrahydrofolate + glycine + H2O = (6S)-5,6,7,8-tetrahydrofolate + L-serine. Its pathway is one-carbon metabolism; tetrahydrofolate interconversion. It functions in the pathway amino-acid biosynthesis; glycine biosynthesis; glycine from L-serine: step 1/1. In terms of biological role, catalyzes the reversible interconversion of serine and glycine with tetrahydrofolate (THF) serving as the one-carbon carrier. This reaction serves as the major source of one-carbon groups required for the biosynthesis of purines, thymidylate, methionine, and other important biomolecules. Also exhibits THF-independent aldolase activity toward beta-hydroxyamino acids, producing glycine and aldehydes, via a retro-aldol mechanism. The protein is Serine hydroxymethyltransferase of Lactococcus lactis subsp. cremoris (strain MG1363).